The sequence spans 319 residues: 4-hydroxy-3-methylbut-2-enyl diphosphate reductase (319 aa).

Cysteine 15 lines the [4Fe-4S] cluster pocket. Residues histidine 44 and histidine 77 each contribute to the (2E)-4-hydroxy-3-methylbut-2-enyl diphosphate site. Dimethylallyl diphosphate-binding residues include histidine 44 and histidine 77. Histidine 44 and histidine 77 together coordinate isopentenyl diphosphate. Cysteine 99 provides a ligand contact to [4Fe-4S] cluster. (2E)-4-hydroxy-3-methylbut-2-enyl diphosphate is bound at residue histidine 127. Histidine 127 contributes to the dimethylallyl diphosphate binding site. Position 127 (histidine 127) interacts with isopentenyl diphosphate. Glutamate 129 serves as the catalytic Proton donor. Threonine 167 contacts (2E)-4-hydroxy-3-methylbut-2-enyl diphosphate. A [4Fe-4S] cluster-binding site is contributed by cysteine 197. (2E)-4-hydroxy-3-methylbut-2-enyl diphosphate-binding residues include serine 225, serine 226, asparagine 227, and serine 269. Serine 225, serine 226, asparagine 227, and serine 269 together coordinate dimethylallyl diphosphate. Isopentenyl diphosphate-binding residues include serine 225, serine 226, asparagine 227, and serine 269.

This sequence belongs to the IspH family. The cofactor is [4Fe-4S] cluster.

It catalyses the reaction isopentenyl diphosphate + 2 oxidized [2Fe-2S]-[ferredoxin] + H2O = (2E)-4-hydroxy-3-methylbut-2-enyl diphosphate + 2 reduced [2Fe-2S]-[ferredoxin] + 2 H(+). The enzyme catalyses dimethylallyl diphosphate + 2 oxidized [2Fe-2S]-[ferredoxin] + H2O = (2E)-4-hydroxy-3-methylbut-2-enyl diphosphate + 2 reduced [2Fe-2S]-[ferredoxin] + 2 H(+). The protein operates within isoprenoid biosynthesis; dimethylallyl diphosphate biosynthesis; dimethylallyl diphosphate from (2E)-4-hydroxy-3-methylbutenyl diphosphate: step 1/1. Its pathway is isoprenoid biosynthesis; isopentenyl diphosphate biosynthesis via DXP pathway; isopentenyl diphosphate from 1-deoxy-D-xylulose 5-phosphate: step 6/6. In terms of biological role, catalyzes the conversion of 1-hydroxy-2-methyl-2-(E)-butenyl 4-diphosphate (HMBPP) into a mixture of isopentenyl diphosphate (IPP) and dimethylallyl diphosphate (DMAPP). Acts in the terminal step of the DOXP/MEP pathway for isoprenoid precursor biosynthesis. This chain is 4-hydroxy-3-methylbut-2-enyl diphosphate reductase, found in Rhodopirellula baltica (strain DSM 10527 / NCIMB 13988 / SH1).